We begin with the raw amino-acid sequence, 186 residues long: Probable RNA 2'-phosphotransferase (186 aa).

This sequence belongs to the KptA/TPT1 family.

In terms of biological role, removes the 2'-phosphate from RNA via an intermediate in which the phosphate is ADP-ribosylated by NAD followed by a presumed transesterification to release the RNA and generate ADP-ribose 1''-2''-cyclic phosphate (APPR&gt;P). May function as an ADP-ribosylase. The polypeptide is Probable RNA 2'-phosphotransferase (Clostridium perfringens (strain SM101 / Type A)).